Reading from the N-terminus, the 408-residue chain is Neutral cholesterol ester hydrolase 1 (408 aa).

The Cytoplasmic portion of the chain corresponds to 1-4 (MRSS). The helical; Signal-anchor for type II membrane protein transmembrane segment at 5-25 (CVLLAALLALAAYYVYIPLPS) threads the bilayer. Topologically, residues 26–408 (AVSDPWKLML…SYIKWLDQNL (383 aa)) are lumenal. The Involved in the stabilization of the negatively charged intermediate by the formation of the oxyanion hole motif lies at 113–115 (HGG). Residue Ser191 is part of the active site. A glycan (N-linked (GlcNAc...) asparagine) is linked at Asn270. Residue Asp348 is part of the active site. An N-linked (GlcNAc...) asparagine glycan is attached at Asn367. The active site involves His378. A glycan (N-linked (GlcNAc...) asparagine) is linked at Asn389.

This sequence belongs to the 'GDXG' lipolytic enzyme family. In terms of processing, N-glycosylated. In terms of tissue distribution, present in brain, heart, kidney, lung, spinal cord and testis but not liver (at protein level). Expressed in peritoneal macrophages and kidney.

It localises to the cell membrane. It is found in the microsome. It carries out the reaction a 1-O-alkyl-2-acetyl-sn-glycerol + H2O = a 1-O-alkyl-sn-glycerol + acetate + H(+). The catalysed reaction is 1-O-hexadecyl-2-acetyl-sn-glycerol + H2O = 1-O-hexadecyl-sn-glycerol + acetate + H(+). It catalyses the reaction a cholesterol ester + H2O = cholesterol + a fatty acid + H(+). The enzyme catalyses cholesteryl (9Z-octadecenoate) + H2O = cholesterol + (9Z)-octadecenoate + H(+). Inhibited by bulky trifluoromethyl ketones. Functionally, hydrolyzes 2-acetyl monoalkylglycerol ether (1-O-alkyl-2-acetyl-sn-glycerol), the penultimate precursor of the pathway for de novo synthesis of platelet-activating factor. May be responsible for the hydrolysis of cholesterol esters (such as cholesteryl (9Z-octadecenoate)) in macrophages. Also involved in organ detoxification by hydrolyzing exogenous organophosphorus compounds. This Mus musculus (Mouse) protein is Neutral cholesterol ester hydrolase 1 (Nceh1).